The following is a 371-amino-acid chain: Aminomethyltransferase (371 aa).

It belongs to the GcvT family. In terms of assembly, the glycine cleavage system is composed of four proteins: P, T, L and H.

It catalyses the reaction N(6)-[(R)-S(8)-aminomethyldihydrolipoyl]-L-lysyl-[protein] + (6S)-5,6,7,8-tetrahydrofolate = N(6)-[(R)-dihydrolipoyl]-L-lysyl-[protein] + (6R)-5,10-methylene-5,6,7,8-tetrahydrofolate + NH4(+). Its function is as follows. The glycine cleavage system catalyzes the degradation of glycine. The chain is Aminomethyltransferase from Cellvibrio japonicus (strain Ueda107) (Pseudomonas fluorescens subsp. cellulosa).